A 375-amino-acid polypeptide reads, in one-letter code: uncharacterized protein (375 aa).

The interval 54-78 (EGIPPPTQSQEPLKPQENISRPIHH) is disordered.

This is an uncharacterized protein from Bos taurus (Bovine).